The following is an 807-amino-acid chain: Probable dimethyl sulfoxide reductase chain YnfF (807 aa).

Positions 1-45 form a signal peptide, tat-type signal; the sequence is MKIHTTEALMKAEISRRSLMKTSALGSLALASSAFTLPFSQMVRA. The 4Fe-4S Mo/W bis-MGD-type domain maps to 52-113; sequence EKAVWSSCTV…SIRRRMNHPD (62 aa). [4Fe-4S] cluster-binding residues include cysteine 59, cysteine 63, cysteine 67, and cysteine 99. A Mo-bis(molybdopterin guanine dinucleotide)-binding site is contributed by serine 195.

The protein belongs to the prokaryotic molybdopterin-containing oxidoreductase family. In terms of assembly, the complex consists of three subunits: YnfF, the reductase; YnfG, an electron transfer protein, and YnfH, a membrane anchor protein. [4Fe-4S] cluster is required as a cofactor. Mo-bis(molybdopterin guanine dinucleotide) serves as cofactor. In terms of processing, exported by the Tat system. The position of the signal peptide cleavage has not been experimentally proven. Can also be exported by the Sec system.

It localises to the cell membrane. Terminal reductase during anaerobic growth on various sulfoxide and N-oxide compounds. This Escherichia coli (strain K12) protein is Probable dimethyl sulfoxide reductase chain YnfF (ynfF).